Reading from the N-terminus, the 341-residue chain is 4-hydroxy-2-oxovalerate aldolase (341 aa).

The 251-residue stretch at 9–259 (VRITEVCLRD…KLDIDLYKMM (251 aa)) folds into the Pyruvate carboxyltransferase domain. 17–18 (RD) serves as a coordination point for substrate. Asp-18 is a binding site for Mn(2+). The active-site Proton acceptor is His-21. Residues Ser-171 and His-198 each coordinate substrate. Mn(2+)-binding residues include His-198 and His-200. A substrate-binding site is contributed by Tyr-289.

It belongs to the 4-hydroxy-2-oxovalerate aldolase family.

It catalyses the reaction (S)-4-hydroxy-2-oxopentanoate = acetaldehyde + pyruvate. This is 4-hydroxy-2-oxovalerate aldolase from Bacillus cereus (strain ATCC 10987 / NRS 248).